Reading from the N-terminus, the 1623-residue chain is ATP-binding cassette sub-family A member 9 (1623 aa).

A helical membrane pass occupies residues 31 to 51; sequence LLEWLFSLLLILFVYQLSSNL. A glycan (N-linked (GlcNAc...) asparagine) is linked at Asn-120. 6 helical membrane passes run 225-245, 265-285, 295-315, 329-349, 354-374, and 398-418; these read FFIF…SVNI, AFWL…AVLM, VVLT…LSLI, FLTG…GFTA, LPAF…TTGM, and LIMA…VLAL. The ABC transporter 1 domain occupies 481 to 716; it reads IRIKNLKKEY…WGIGYHLSLH (236 aa). An ATP-binding site is contributed by 517–524; it reads GHSGAGKT. 7 helical membrane-spanning segments follow: residues 863–883, 1025–1045, 1071–1091, 1107–1127, 1135–1155, 1163–1183, and 1199–1219; these read LMTV…EHLV, AFFW…GSIS, LVDI…DSVF, IPCS…ISFI, SGIW…ATDI, LLIC…LIFS, and QLVF…FFIL. In terms of domain architecture, ABC transporter 2 spans 1287–1520; sequence LRKEYIGRTK…FGKDYLLEMK (234 aa). Position 1325–1332 (1325–1332) interacts with ATP; sequence GHNGAGKS.

Belongs to the ABC transporter superfamily. ABCA family. As to expression, highly expressed in heart and to lower extent in kidney, brain and spleen. Weakly expressed in developing and adult brains. Weakly expressed in the cerebellar granular layer at P14 and P21.

It is found in the membrane. Transporter that may play a role in monocyte differentiation and lipid transport and homeostasis. This is ATP-binding cassette sub-family A member 9 (Abca9) from Mus musculus (Mouse).